Reading from the N-terminus, the 430-residue chain is MGPATGMTPDKNIESPTAEKVPGLSQTENMGSLPEEVGAARPKASMVDNGATDEELTNLNWLHESTNLLNNFSLGSEGVSAGSPLYDIEGDLSPSGCQTPEKLSASSKPPYSFSLLIYMAIEHSPNKCLPVKDIYSWILDRFPYFSTAPTGWKNSVRHNLSLNKYFQKVERSHGKVNGKGSLWCVDPEYKPSLIQALKKQPFSSALALYTPPTSPTSVSSRPYVLTSASRRKQIHYVKDSDIDAATAMMLLNSSIKEEALDRQKPQPLKVVLPKKRSYASAFKHCPPLSLQENDGEVINIDPKEDHNYSASGGDSQRCESRSSVSSLSSVEEVYEFIPKNSRTGSDGSEGFHSEDDTDIDYEEDTLGDNGYVPQPSGNDLHGSKLRKEASQDIDEELKEAAGSLLHLAGIRTCLDSLLKTAKAQSHKHRK.

The segment at 1–47 is disordered; sequence MGPATGMTPDKNIESPTAEKVPGLSQTENMGSLPEEVGAARPKASMV. Positions 108–204 form a DNA-binding region, fork-head; sequence KPPYSFSLLI…QALKKQPFSS (97 aa). 2 disordered regions span residues 299-326 and 338-391; these read NIDP…SVSS and PKNS…EASQ. Residues 355–366 are compositionally biased toward acidic residues; the sequence is DDTDIDYEEDTL. Over residues 381–390 the composition is skewed to basic and acidic residues; sequence HGSKLRKEAS.

As to expression, expressed in the developing eye from stage 23. Localized to the prospective retinal layer and a layer of cells lateral to the ventricular zone. At stage 29, expression extends to the branchial arches and the brain. At stage 33/34, expressed in the vagal ganglion. At stage 36, expression in the retina decreases. Not expressed in the eye lens.

It localises to the nucleus. The polypeptide is Forkhead box protein N2 (Xenopus laevis (African clawed frog)).